A 469-amino-acid polypeptide reads, in one-letter code: Probable Xaa-Pro aminopeptidase PEPP (469 aa).

Residues aspartate 257, aspartate 268, glutamate 391, and glutamate 436 each coordinate Mn(2+).

The protein belongs to the peptidase M24B family. Mn(2+) serves as cofactor.

The catalysed reaction is Release of any N-terminal amino acid, including proline, that is linked to proline, even from a dipeptide or tripeptide.. Its function is as follows. Catalyzes the removal of a penultimate prolyl residue from the N-termini of peptides. The chain is Probable Xaa-Pro aminopeptidase PEPP (PEPP) from Fusarium vanettenii (strain ATCC MYA-4622 / CBS 123669 / FGSC 9596 / NRRL 45880 / 77-13-4) (Fusarium solani subsp. pisi).